Consider the following 420-residue polypeptide: 3-isopropylmalate dehydratase large subunit (420 aa).

Cys-300, Cys-360, and Cys-363 together coordinate [4Fe-4S] cluster.

It belongs to the aconitase/IPM isomerase family. LeuC type 2 subfamily. As to quaternary structure, heterodimer of LeuC and LeuD. [4Fe-4S] cluster is required as a cofactor.

It carries out the reaction (2R,3S)-3-isopropylmalate = (2S)-2-isopropylmalate. It participates in amino-acid biosynthesis; L-leucine biosynthesis; L-leucine from 3-methyl-2-oxobutanoate: step 2/4. Catalyzes the isomerization between 2-isopropylmalate and 3-isopropylmalate, via the formation of 2-isopropylmaleate. The sequence is that of 3-isopropylmalate dehydratase large subunit from Heliobacterium modesticaldum (strain ATCC 51547 / Ice1).